Here is a 362-residue protein sequence, read N- to C-terminus: Methylthioribose-1-phosphate isomerase (362 aa).

Substrate-binding positions include 49 to 51 (RGA), arginine 89, and glutamine 201. Aspartate 242 functions as the Proton donor in the catalytic mechanism. Residue 252 to 253 (NK) participates in substrate binding.

This sequence belongs to the eIF-2B alpha/beta/delta subunits family. MtnA subfamily.

The catalysed reaction is 5-(methylsulfanyl)-alpha-D-ribose 1-phosphate = 5-(methylsulfanyl)-D-ribulose 1-phosphate. Its pathway is amino-acid biosynthesis; L-methionine biosynthesis via salvage pathway; L-methionine from S-methyl-5-thio-alpha-D-ribose 1-phosphate: step 1/6. Functionally, catalyzes the interconversion of methylthioribose-1-phosphate (MTR-1-P) into methylthioribulose-1-phosphate (MTRu-1-P). The sequence is that of Methylthioribose-1-phosphate isomerase from Leptospira borgpetersenii serovar Hardjo-bovis (strain JB197).